Here is a 256-residue protein sequence, read N- to C-terminus: METYVNKLHEGSTYTAAVQYNVLEKDDDPASLTIWVPMFQSSVPADLLIKELASINILVKQISTPKGPSLRVTINSRSAVLAQMPSNFIISANVSLDERSKLAYDVTTPCEIKACSLTCLKVKSMLTTVKDLTMKTFNPTHEIIALCEFENIMTSKRVIIPTYLRPISVKNKDLNSLENIATTEFKNAITNAKIIPYAGLVLVITVTDNKGAFKYIKPQSQFIVDLGAYLEKESIYYVTTNWKHTATRFSIKPLED.

Residues 1–110 are interaction with M2-1; the sequence is METYVNKLHE…KLAYDVTTPC (110 aa). A nuclear targeting and binding to host importin KPNB1 region spans residues 110-183; that stretch reads CEIKACSLTC…LNSLENIATT (74 aa). The short motif at 194-206 is the Nuclear export signal element; it reads IIPYAGLVLVITV. A Phosphothreonine modification is found at Thr205.

This sequence belongs to the pneumovirinae M protein family. As to quaternary structure, forms dimers. Forms higher-order oligomers. Interacts with glycoprotein G (via N-terminus). Interacts with protein M2-1; this interaction directs the matrix protein localization to cytoplasmic inclusions comprising viral proteins L, N, P, and M2-1 and mediates the matrix protein association with the nucleocapsid. Interacts with host KPNB1; this interaction mediates nuclear import of the matrix protein early during infection. Interacts with host AP3M1; this interaction plays an essential role in trafficking the matrix protein in host cells. Interacts with host CAV1; this interaction probably facilitates viral budding. Interacts with host CFL1; this interaction probably facilitates viral replication. Interacts with host ZNF502; this interaction probably facilitates viral release. Post-translationally, phosphorylation is important for oligomerization.

The protein localises to the virion. The protein resides in the host cytoplasm. It is found in the host nucleus. Its subcellular location is the host cell membrane. Plays a crucial role in virus assembly into filaments and budding. Early in infection, localizes in the nucleus where it inhibits host cell transcription through direct binding to host chromatin. Later in infection, traffics to the cytoplasm through the action of host CRM1 to associate with inclusion bodies, the site of viral transcription and replication. During virus assembly and budding, acts as a bridge between the nucleocapsid and the lipid bilayer. The polypeptide is Matrix protein (M) (Human respiratory syncytial virus B (strain B1)).